The following is a 448-amino-acid chain: Ribonuclease J (448 aa).

Positions 81, 83, 85, 86, 151, and 173 each coordinate Zn(2+). Residue 383–387 participates in substrate binding; the sequence is HVSGH. His409 lines the Zn(2+) pocket.

Belongs to the metallo-beta-lactamase superfamily. RNA-metabolizing metallo-beta-lactamase-like family. Archaeal RNase J subfamily. As to quaternary structure, forms homodimers on heating to 60 degrees Celsius which may be the active form. It depends on Zn(2+) as a cofactor.

The protein resides in the cytoplasm. Inhibited by imidazole. A 5'-3' exoribonuclease with a strong reference for 5'-monophosphorylated RNA and no endoribonuclease activty. Also has robust 5'-'3 nuclease activity on single-stranded DNA (exodeoxyribonuclease, exoDNase). May be involved in RNA degradation. The polypeptide is Ribonuclease J (Methanocaldococcus jannaschii (strain ATCC 43067 / DSM 2661 / JAL-1 / JCM 10045 / NBRC 100440) (Methanococcus jannaschii)).